A 230-amino-acid chain; its full sequence is Movement and silencing protein TGBp1 (230 aa).

The (+)RNA virus helicase ATP-binding domain occupies 1-114; it reads MDSIINALTS…GLALRPHFIK (114 aa). The 116-residue stretch at 115–230 folds into the (+)RNA virus helicase C-terminal domain; sequence SVSHRLCPAT…VRSPPPHPSH (116 aa).

The protein belongs to the Tymovirales TGBp1 protein family. As to quaternary structure, homodimer and homooligomer. Interacts with capsid protein. Interacts with host AGO1; this interaction targets the host protein for degradation, thereby suppressing the antiviral RNA silencing.

The protein localises to the host cytoplasm. Transports viral genome to neighboring plant cells directly through plasmosdesmata, without any budding. The movement protein allows efficient cell to cell propagation, by bypassing the host cell wall barrier. Increases plasmodesma size exclusion limit. Acts as a suppressor of RNA-mediated gene silencing, also known as post-transcriptional gene silencing (PTGS), a mechanism of plant viral defense that limits the accumulation of viral RNAs. This Plantago asiatica (P1AMV) protein is Movement and silencing protein TGBp1.